Consider the following 115-residue polypeptide: Protein translation factor SUI1 homolog (115 aa).

The protein belongs to the SUI1 family.

In terms of biological role, probably involved in translation. The protein is Protein translation factor SUI1 homolog (TIF) of Zea mays (Maize).